The chain runs to 307 residues: Taste receptor type 2 member 106 (307 aa).

Residues 1–7 (MLTIPEG) are Extracellular-facing. The chain crosses the membrane as a helical span at residues 8-28 (ILLCFITSGSVLGVLGNGFIL). The Cytoplasmic portion of the chain corresponds to 29–41 (HVNCTDCVRQKFS). A helical membrane pass occupies residues 42–62 (TTGFIFTGLAISRICVICIII). Over 63–81 (SDGYLKLFSPHMVASDAHI) the chain is Extracellular. The helical transmembrane segment at 82 to 104 (IGISYLWIITNHTSTCFATILNL) threads the bilayer. At 105 to 124 (FYFLKIANFSHYIFFCLKRK) the chain is on the cytoplasmic side. A helical membrane pass occupies residues 125–145 (LNTIFIFLLGCLFISWSVAFP). Topologically, residues 146–179 (QTVKIFNDKMKHRNTSWKFHLHKSKFIINHILLN) are extracellular. N-linked (GlcNAc...) asparagine glycosylation occurs at Asn-159. The helical transmembrane segment at 180-200 (LGVIFFCMVAIITSFLLIISL) threads the bilayer. Residues 201 to 227 (WKHNRKMQLYVSRFKSLNTEVHLKVMK) lie on the Cytoplasmic side of the membrane. The chain crosses the membrane as a helical span at residues 228–248 (VLISFIILLILHVIGILIETL). Residues 249-257 (SFLRYENKL) lie on the Extracellular side of the membrane. Residues 258 to 278 (LLILGLNFSSMYPCCHSFILI) form a helical membrane-spanning segment. Residues 279–307 (LANNQLKQASLKALKQFKCHKKDKDVRET) lie on the Cytoplasmic side of the membrane.

The protein belongs to the G-protein coupled receptor T2R family.

Its subcellular location is the membrane. Putative taste receptor which may play a role in the perception of bitterness. This chain is Taste receptor type 2 member 106, found in Rattus norvegicus (Rat).